Here is a 693-residue protein sequence, read N- to C-terminus: DNA-directed RNA polymerase subunit beta' (693 aa).

Zn(2+)-binding residues include Cys-76, Cys-78, Cys-94, and Cys-97. 3 residues coordinate Mg(2+): Asp-496, Asp-498, and Asp-500.

It belongs to the RNA polymerase beta' chain family. RpoC1 subfamily. In terms of assembly, in plastids the minimal PEP RNA polymerase catalytic core is composed of four subunits: alpha, beta, beta', and beta''. When a (nuclear-encoded) sigma factor is associated with the core the holoenzyme is formed, which can initiate transcription. Mg(2+) is required as a cofactor. The cofactor is Zn(2+).

Its subcellular location is the plastid. It is found in the chloroplast. The catalysed reaction is RNA(n) + a ribonucleoside 5'-triphosphate = RNA(n+1) + diphosphate. In terms of biological role, DNA-dependent RNA polymerase catalyzes the transcription of DNA into RNA using the four ribonucleoside triphosphates as substrates. This chain is DNA-directed RNA polymerase subunit beta', found in Nuphar advena (Common spatterdock).